The primary structure comprises 211 residues: ATP phosphoribosyltransferase (211 aa).

It belongs to the ATP phosphoribosyltransferase family. Short subfamily. Heteromultimer composed of HisG and HisZ subunits.

The protein localises to the cytoplasm. It catalyses the reaction 1-(5-phospho-beta-D-ribosyl)-ATP + diphosphate = 5-phospho-alpha-D-ribose 1-diphosphate + ATP. The protein operates within amino-acid biosynthesis; L-histidine biosynthesis; L-histidine from 5-phospho-alpha-D-ribose 1-diphosphate: step 1/9. Functionally, catalyzes the condensation of ATP and 5-phosphoribose 1-diphosphate to form N'-(5'-phosphoribosyl)-ATP (PR-ATP). Has a crucial role in the pathway because the rate of histidine biosynthesis seems to be controlled primarily by regulation of HisG enzymatic activity. The polypeptide is ATP phosphoribosyltransferase (Bacillus cereus (strain ATCC 14579 / DSM 31 / CCUG 7414 / JCM 2152 / NBRC 15305 / NCIMB 9373 / NCTC 2599 / NRRL B-3711)).